Consider the following 310-residue polypeptide: Phosphoribosylaminoimidazole-succinocarboxamide synthase (310 aa).

The protein belongs to the SAICAR synthetase family.

It carries out the reaction 5-amino-1-(5-phospho-D-ribosyl)imidazole-4-carboxylate + L-aspartate + ATP = (2S)-2-[5-amino-1-(5-phospho-beta-D-ribosyl)imidazole-4-carboxamido]succinate + ADP + phosphate + 2 H(+). It participates in purine metabolism; IMP biosynthesis via de novo pathway; 5-amino-1-(5-phospho-D-ribosyl)imidazole-4-carboxamide from 5-amino-1-(5-phospho-D-ribosyl)imidazole-4-carboxylate: step 1/2. This chain is Phosphoribosylaminoimidazole-succinocarboxamide synthase, found in Cytophaga hutchinsonii (strain ATCC 33406 / DSM 1761 / CIP 103989 / NBRC 15051 / NCIMB 9469 / D465).